Here is a 611-residue protein sequence, read N- to C-terminus: Dolabella-3,7-dien-18-ol synthase TPS06 (611 aa).

Mg(2+) contacts are provided by aspartate 363, aspartate 367, aspartate 507, threonine 511, and glutamate 515. The DDXXD motif; degenerate signature appears at 363 to 367 (DNTFD).

This sequence belongs to the terpene synthase family. Tpsa subfamily. Requires Mg(2+) as cofactor. It depends on Mn(2+) as a cofactor. In terms of tissue distribution, predominantly expressed in flowers but also in stems, siliques, roots and leaves.

The protein localises to the cytoplasm. The enzyme catalyses (2E,6E,10E)-geranylgeranyl diphosphate + H2O = (3E,7E)-dolabella-3,7-dien-18-ol + diphosphate. It functions in the pathway secondary metabolite biosynthesis; terpenoid biosynthesis. Functionally, involved in terpene biosynthesis in roots. Possesses sesquiterpene (C15) synthase activity and diterpene (C20) synthase activity in vitro. Possesses dolabella-3,7-dien-18-ol synthase activity in vitro. Catalyzes the formation of dolabella-3,7-dien-18-ol from geranylgeranyl diphosphate. This Arabidopsis thaliana (Mouse-ear cress) protein is Dolabella-3,7-dien-18-ol synthase TPS06.